The chain runs to 121 residues: UPF0102 protein BHWA1_02005 (121 aa).

Belongs to the UPF0102 family.

The polypeptide is UPF0102 protein BHWA1_02005 (Brachyspira hyodysenteriae (strain ATCC 49526 / WA1)).